Reading from the N-terminus, the 140-residue chain is Ig heavy chain V region 93G7 (140 aa).

An N-terminal signal peptide occupies residues 1 to 19 (MGWSFIFLFLLSVTAGVHS). The Ig-like domain maps to 20 to 139 (EVQLQQSGAE…WGQGTPLTVS (120 aa)).

This chain is Ig heavy chain V region 93G7, found in Mus musculus (Mouse).